Consider the following 1241-residue polypeptide: High-affinity potassium transport protein (1241 aa).

2 consecutive transmembrane segments (helical) span residues 49-70 (NFIA…ILLY) and 78-98 (IDAL…TVDV). Asn-100 is a glycosylation site (N-linked (GlcNAc...) asparagine). A helical transmembrane segment spans residues 107–127 (IILYIICCISTPIAVHSCLAF). 3 disordered regions span residues 162–241 (TART…SLDD), 253–316 (KYHG…TPED), and 329–570 (EGTA…QLQQ). Residues 164 to 177 (RTMTKSKTGGTQRV) are compositionally biased toward polar residues. Composition is skewed to basic and acidic residues over residues 181-191 (GKSDKRDDFQE) and 199-214 (VNRD…HNSR). Low complexity predominate over residues 215 to 238 (DSNSNANTNSSNNNSINHNGSSGS). N-linked (GlcNAc...) asparagine glycosylation is found at Asn-223, Asn-227, Asn-233, Asn-257, Asn-274, Asn-353, and Asn-364. Polar residues-rich tracts occupy residues 268-280 (NTAT…QKLK) and 345-365 (TDGT…TMNE). The span at 366–375 (SKIRIQDKGA) shows a compositional bias: basic and acidic residues. Positions 380-411 (DQDSVLHSSNSSACTSDEDSLPTNFGGTTPSL) are enriched in polar residues. N-linked (GlcNAc...) asparagine glycosylation is found at Asn-389 and Asn-442. Basic residues-rich tracts occupy residues 446 to 455 (PPRKASKSKR) and 482 to 497 (HLPK…KRRL). Over residues 498 to 509 (STGSIDKNSSSD) the composition is skewed to polar residues. 2 N-linked (GlcNAc...) asparagine glycosylation sites follow: Asn-505 and Asn-538. The span at 520-545 (NDDDDGNEGDNMEEYFADNESGDEDD) shows a compositional bias: acidic residues. Residues 561–570 (KQQQQHQLQQ) are compositionally biased toward low complexity. N-linked (GlcNAc...) asparagine glycosylation is found at Asn-584, Asn-660, Asn-681, Asn-691, and Asn-741. Positions 677–714 (NSHRNGSEDVSSDSNETTYPLNGNNDHSQNDANGYPTY) are disordered. The span at 684-708 (EDVSSDSNETTYPLNGNNDHSQNDA) shows a compositional bias: polar residues. 5 consecutive transmembrane segments (helical) span residues 784–806 (ILVV…WINL), 819–840 (VSPT…GLTL), 844–864 (SMMS…FIII), 868–888 (GFPI…PDLS), and 904–924 (CFTL…LVGL). Asn-925 is a glycosylation site (N-linked (GlcNAc...) asparagine). 2 helical membrane-spanning segments follow: residues 929–949 (WILF…SKGY) and 977–997 (SIQV…AISI). The disordered stretch occupies residues 1011–1073 (YGEMGGKPED…ENENPNEEST (63 aa)). Acidic residues predominate over residues 1021–1041 (TDTEEDGDCDDEDDDNEEEES). Basic residues predominate over residues 1050-1062 (GKSKKETKKKKKR). The next 2 helical transmembrane spans lie at 1084-1104 (QLSF…ICER) and 1117-1137 (VFTI…SLGY). Asn-1141 is a glycosylation site (N-linked (GlcNAc...) asparagine). The segment at 1222–1241 (DELKHKRSLSRSSKRSTKTN) is disordered. The span at 1226–1241 (HKRSLSRSSKRSTKTN) shows a compositional bias: basic residues.

Belongs to the TrkH potassium transport family.

Its subcellular location is the membrane. In terms of biological role, this protein is required for high-affinity potassium transport. The protein is High-affinity potassium transport protein (TRK1) of Saccharomyces uvarum (Yeast).